Reading from the N-terminus, the 127-residue chain is Large ribosomal subunit protein bL17 (127 aa).

It belongs to the bacterial ribosomal protein bL17 family. As to quaternary structure, part of the 50S ribosomal subunit. Contacts protein L32.

The polypeptide is Large ribosomal subunit protein bL17 (Xanthomonas axonopodis pv. citri (strain 306)).